Consider the following 178-residue polypeptide: Dual-action ribosomal maturation protein DarP (178 aa).

Positions 1-14 are enriched in polar residues; the sequence is MTVSDHPQTVSQPD. The tract at residues 1-25 is disordered; it reads MTVSDHPQTVSQPDPESESRPSKTR.

Belongs to the DarP family.

It is found in the cytoplasm. In terms of biological role, member of a network of 50S ribosomal subunit biogenesis factors which assembles along the 30S-50S interface, preventing incorrect 23S rRNA structures from forming. Promotes peptidyl transferase center (PTC) maturation. This is Dual-action ribosomal maturation protein DarP from Nitrosomonas europaea (strain ATCC 19718 / CIP 103999 / KCTC 2705 / NBRC 14298).